The primary structure comprises 1105 residues: Ran-binding protein 6 (1105 aa).

Ala-2 carries the post-translational modification N-acetylalanine. HEAT repeat units follow at residues 219–257 (FKDF…TVPK), 361–399 (KVVL…GCHQ), 402–440 (ESIL…DFAP), and 444–483 (KKFH…DCPK). The ran-GTP binding stretch occupies residues 333-383 (DEMEEDDFDSNAVAAESALDRLACGLGGKVVLPMTKEHIMQMLQSPDWKYR). Residues 806–842 (KAKLEGHFKNQELRQVKRQEENYDQQVEMSLQDEDEC) adopt a coiled-coil conformation. 3 HEAT repeats span residues 866 to 905 (LPWF…HCSP), 908 to 946 (FKYV…FGGD), and 949 to 987 (RSLC…IGKI).

This sequence belongs to the importin beta family.

The protein resides in the cytoplasm. Its subcellular location is the nucleus. May function in nuclear protein import as nuclear transport receptor. This is Ran-binding protein 6 (RANBP6) from Homo sapiens (Human).